The primary structure comprises 130 residues: Lysozyme C, kidney isozyme (130 aa).

The C-type lysozyme domain occupies 1-130 (KVFERCELAR…LTSYIQGCGV (130 aa)). 4 cysteine pairs are disulfide-bonded: C6–C128, C30–C116, C65–C81, and C77–C95. Catalysis depends on residues E35 and D53.

Belongs to the glycosyl hydrolase 22 family. Monomer.

The protein localises to the secreted. It carries out the reaction Hydrolysis of (1-&gt;4)-beta-linkages between N-acetylmuramic acid and N-acetyl-D-glucosamine residues in a peptidoglycan and between N-acetyl-D-glucosamine residues in chitodextrins.. In terms of biological role, lysozymes have primarily a bacteriolytic function; those in tissues and body fluids are associated with the monocyte-macrophage system and enhance the activity of immunoagents. This chain is Lysozyme C, kidney isozyme, found in Ovis aries (Sheep).